A 216-amino-acid chain; its full sequence is uncharacterized protein (216 aa).

The protein localises to the plastid. Its subcellular location is the chloroplast. This is an uncharacterized protein from Pyropia yezoensis (Susabi-nori).